The primary structure comprises 365 residues: Mitogen-activated protein kinase 13 (365 aa).

The Protein kinase domain occupies 25 to 308 (YVSPTHVGSG…AAQALTHPFF (284 aa)). An ATP-binding site is contributed by 31–39 (VGSGAYGSV). Ser47 bears the Phosphoserine mark. Lys54 contacts ATP. The Proton acceptor role is filled by Asp150. Thr180 is subject to Phosphothreonine; by MAP2K3, MAP2K4, MAP2K6 and MAP2K7. Positions 180–182 (TGY) match the TXY motif. Phosphotyrosine; by MAP2K3, MAP2K4, MAP2K6 and MAP2K7 is present on Tyr182. A Phosphoserine modification is found at Ser350.

It belongs to the protein kinase superfamily. CMGC Ser/Thr protein kinase family. MAP kinase subfamily. Interacts with MAPK8IP2. It depends on Mg(2+) as a cofactor. Dually phosphorylated on Thr-180 and Tyr-182 by MAP2K3/MKK3, MAP2K4/MKK4, MAP2K6/MKK6 and MAP2K7/MKK7, which activates the enzyme. Dephosphorylated by dual specificity phosphatase DUSP1.

The enzyme catalyses L-seryl-[protein] + ATP = O-phospho-L-seryl-[protein] + ADP + H(+). It carries out the reaction L-threonyl-[protein] + ATP = O-phospho-L-threonyl-[protein] + ADP + H(+). With respect to regulation, activated by phosphorylation on threonine and tyrosine by dual specificity kinases, MAP2K3/MKK3, MAP2K6/MKK6, MAP2K4/MKK4 and MAP2K7/MKK7. Activation by ultraviolet radiation, hyperosmotic shock, anisomycin or by TNF-alpha is mediated by MAP2K3/MKK3. Inhibited by dual specificity phosphatase DUSP1. In terms of biological role, serine/threonine kinase which acts as an essential component of the MAP kinase signal transduction pathway. MAPK13 is one of the four p38 MAPKs which play an important role in the cascades of cellular responses evoked by extracellular stimuli such as pro-inflammatory cytokines or physical stress leading to direct activation of transcription factors such as ELK1 and ATF2. Accordingly, p38 MAPKs phosphorylate a broad range of proteins and it has been estimated that they may have approximately 200 to 300 substrates each. MAPK13 is one of the less studied p38 MAPK isoforms. Some of the targets are downstream kinases such as MAPKAPK2, which are activated through phosphorylation and further phosphorylate additional targets. Plays a role in the regulation of protein translation by phosphorylating and inactivating EEF2K. Involved in cytoskeletal remodeling through phosphorylation of MAPT and STMN1. Mediates UV irradiation induced up-regulation of the gene expression of CXCL14. Plays an important role in the regulation of epidermal keratinocyte differentiation, apoptosis and skin tumor development. Phosphorylates the transcriptional activator MYB in response to stress which leads to rapid MYB degradation via a proteasome-dependent pathway. MAPK13 also phosphorylates and down-regulates PRKD1 during regulation of insulin secretion in pancreatic beta cells. In Pan troglodytes (Chimpanzee), this protein is Mitogen-activated protein kinase 13 (MAPK13).